A 177-amino-acid polypeptide reads, in one-letter code: Bifunctional protein PyrR (177 aa).

Positions 99–111 match the PRPP-binding motif; the sequence is VVLVDDVLYTGRT.

The protein belongs to the purine/pyrimidine phosphoribosyltransferase family. PyrR subfamily.

It carries out the reaction UMP + diphosphate = 5-phospho-alpha-D-ribose 1-diphosphate + uracil. In terms of biological role, regulates the transcription of the pyrimidine nucleotide (pyr) operon in response to exogenous pyrimidines. Its function is as follows. Also displays a weak uracil phosphoribosyltransferase activity which is not physiologically significant. This is Bifunctional protein PyrR from Akkermansia muciniphila (strain ATCC BAA-835 / DSM 22959 / JCM 33894 / BCRC 81048 / CCUG 64013 / CIP 107961 / Muc).